We begin with the raw amino-acid sequence, 409 residues long: Translation initiation factor 2 subunit gamma (409 aa).

The region spanning 7–203 (QPEVNIGLVG…TIESEIPTPD (197 aa)) is the tr-type G domain. Residues 16 to 23 (GHVDHGKT) form a G1 region. Residues Asp-19, Thr-23, Gly-44, and Ser-46 each coordinate Mg(2+). 19 to 24 (DHGKTT) contributes to the GTP binding site. Positions 44-48 (GISIR) are G2. Residues 90–93 (DAPG) form a G3 region. GTP is bound by residues 146 to 149 (NKID) and 181 to 183 (SAQ). Residues 146-149 (NKID) form a G4 region. Positions 181-183 (SAQ) are G5.

This sequence belongs to the TRAFAC class translation factor GTPase superfamily. Classic translation factor GTPase family. EIF2G subfamily. As to quaternary structure, heterotrimer composed of an alpha, a beta and a gamma chain. It depends on Mg(2+) as a cofactor.

It carries out the reaction GTP + H2O = GDP + phosphate + H(+). In terms of biological role, eIF-2 functions in the early steps of protein synthesis by forming a ternary complex with GTP and initiator tRNA. This chain is Translation initiation factor 2 subunit gamma, found in Natronomonas pharaonis (strain ATCC 35678 / DSM 2160 / CIP 103997 / JCM 8858 / NBRC 14720 / NCIMB 2260 / Gabara) (Halobacterium pharaonis).